We begin with the raw amino-acid sequence, 79 residues long: ATP synthase subunit c (79 aa).

The next 2 membrane-spanning stretches (helical) occupy residues 11–31 (IAVAVMIGLAAIGAAVGIGIL) and 59–79 (LVDAIPMIAVGLGLYMLFAVI).

It belongs to the ATPase C chain family. In terms of assembly, F-type ATPases have 2 components, F(1) - the catalytic core - and F(0) - the membrane proton channel. F(1) has five subunits: alpha(3), beta(3), gamma(1), delta(1), epsilon(1). F(0) has three main subunits: a(1), b(2) and c(10-14). The alpha and beta chains form an alternating ring which encloses part of the gamma chain. F(1) is attached to F(0) by a central stalk formed by the gamma and epsilon chains, while a peripheral stalk is formed by the delta and b chains.

Its subcellular location is the cell membrane. F(1)F(0) ATP synthase produces ATP from ADP in the presence of a proton or sodium gradient. F-type ATPases consist of two structural domains, F(1) containing the extramembraneous catalytic core and F(0) containing the membrane proton channel, linked together by a central stalk and a peripheral stalk. During catalysis, ATP synthesis in the catalytic domain of F(1) is coupled via a rotary mechanism of the central stalk subunits to proton translocation. Functionally, key component of the F(0) channel; it plays a direct role in translocation across the membrane. A homomeric c-ring of between 10-14 subunits forms the central stalk rotor element with the F(1) delta and epsilon subunits. This is ATP synthase subunit c from Buchnera aphidicola subsp. Baizongia pistaciae (strain Bp).